Consider the following 232-residue polypeptide: Clarin-1 (232 aa).

A helical membrane pass occupies residues 8 to 28 (IIFCMAGVFSFACALGVVTAL). Asparagine 48 carries N-linked (GlcNAc...) asparagine glycosylation. A run of 2 helical transmembrane segments spans residues 101–121 (IILF…FFMY) and 135–155 (LGLY…MILF). Asparagine 184 is a glycosylation site (N-linked (GlcNAc...) asparagine). The chain crosses the membrane as a helical span at residues 186–206 (TTSFWVVFICFFVHFLNGLLI).

It belongs to the clarin family.

It localises to the cell membrane. May have a role in the excitatory ribbon synapse junctions between hair cells and cochlear ganglion cells and presumably also in analogous synapses within the retina. This chain is Clarin-1 (Clrn1), found in Rattus norvegicus (Rat).